The primary structure comprises 147 residues: UPF0306 protein YhbP (147 aa).

This sequence belongs to the UPF0306 family.

The chain is UPF0306 protein YhbP from Escherichia coli O6:K15:H31 (strain 536 / UPEC).